We begin with the raw amino-acid sequence, 341 residues long: Anthranilate phosphoribosyltransferase (341 aa).

Residues glycine 79, 82 to 83, threonine 87, 89 to 92, 107 to 115, and serine 119 each bind 5-phospho-alpha-D-ribose 1-diphosphate; these read GD, NIST, and KHGNRAVSS. Glycine 79 is an anthranilate binding site. Position 91 (serine 91) interacts with Mg(2+). Asparagine 110 serves as a coordination point for anthranilate. Arginine 165 is an anthranilate binding site. Mg(2+) contacts are provided by aspartate 224 and glutamate 225.

It belongs to the anthranilate phosphoribosyltransferase family. As to quaternary structure, homodimer. The cofactor is Mg(2+).

The enzyme catalyses N-(5-phospho-beta-D-ribosyl)anthranilate + diphosphate = 5-phospho-alpha-D-ribose 1-diphosphate + anthranilate. It functions in the pathway amino-acid biosynthesis; L-tryptophan biosynthesis; L-tryptophan from chorismate: step 2/5. Catalyzes the transfer of the phosphoribosyl group of 5-phosphorylribose-1-pyrophosphate (PRPP) to anthranilate to yield N-(5'-phosphoribosyl)-anthranilate (PRA). The sequence is that of Anthranilate phosphoribosyltransferase from Bacillus cereus (strain AH187).